The sequence spans 611 residues: Chaperone protein HtpG (611 aa).

The segment at 1-326 (MSETLERHAF…TEDLPLNVSR (326 aa)) is a; substrate-binding. The tract at residues 327 to 536 (EMLQATPVLA…SGGPDLQMQR (210 aa)) is b. Residues 537–611 (LLRRAGRGFG…RVAAALAAQA (75 aa)) are c.

This sequence belongs to the heat shock protein 90 family. As to quaternary structure, homodimer.

It localises to the cytoplasm. Molecular chaperone. Has ATPase activity. In Methylobacterium sp. (strain 4-46), this protein is Chaperone protein HtpG.